A 228-amino-acid polypeptide reads, in one-letter code: MADEKNKSQNPDLEQRDINNPRDREALNRAADDFLKARKAEARAEVAEDEAEAAVDETANRIAMLEADNGELKDQLLRAAAEMENLRKRTQRDVQDARTYAVTNFARDMLSVSDNLRRALDAIPADALATDASLKSLADGVEMTERAMLQALERHGVKKLEPEGEKFDPNFHQAMFEVPNPDLPNNTVVQVVQDGYAIGDRVLRPAMVGVSKGGPKATADNGASEGNG.

Disordered stretches follow at residues 1 to 31 (MADEKNKSQNPDLEQRDINNPRDREALNRAA) and 209 to 228 (GVSKGGPKATADNGASEGNG).

The protein belongs to the GrpE family. Homodimer.

The protein localises to the cytoplasm. Functionally, participates actively in the response to hyperosmotic and heat shock by preventing the aggregation of stress-denatured proteins, in association with DnaK and GrpE. It is the nucleotide exchange factor for DnaK and may function as a thermosensor. Unfolded proteins bind initially to DnaJ; upon interaction with the DnaJ-bound protein, DnaK hydrolyzes its bound ATP, resulting in the formation of a stable complex. GrpE releases ADP from DnaK; ATP binding to DnaK triggers the release of the substrate protein, thus completing the reaction cycle. Several rounds of ATP-dependent interactions between DnaJ, DnaK and GrpE are required for fully efficient folding. The sequence is that of Protein GrpE from Brucella anthropi (strain ATCC 49188 / DSM 6882 / CCUG 24695 / JCM 21032 / LMG 3331 / NBRC 15819 / NCTC 12168 / Alc 37) (Ochrobactrum anthropi).